An 865-amino-acid chain; its full sequence is Protein fluG (865 aa).

The region spanning 442–533 (PGVKYVWTQF…VMTWWKSEQG (92 aa)) is the GS beta-grasp domain. Residues 540 to 865 (PRTNLLNINN…ARRKWLVERY (326 aa)) form the GS catalytic domain.

This sequence belongs to the glutamine synthetase family.

It is found in the cytoplasm. Its function is as follows. May function as a GSI-related enzyme in synthesizing a small diffusible factor that acts as an extracellular signal directing asexual sporulation and perhaps other aspects of colony growth. May be involved in brlA activation (an early transcriptional regulator for conidiation specific gene). This Emericella nidulans (strain FGSC A4 / ATCC 38163 / CBS 112.46 / NRRL 194 / M139) (Aspergillus nidulans) protein is Protein fluG (fluG).